The following is a 111-amino-acid chain: Ribosome-binding factor A (111 aa).

The protein belongs to the RbfA family. As to quaternary structure, monomer. Binds 30S ribosomal subunits, but not 50S ribosomal subunits or 70S ribosomes.

The protein resides in the cytoplasm. One of several proteins that assist in the late maturation steps of the functional core of the 30S ribosomal subunit. Associates with free 30S ribosomal subunits (but not with 30S subunits that are part of 70S ribosomes or polysomes). Required for efficient processing of 16S rRNA. May interact with the 5'-terminal helix region of 16S rRNA. This is Ribosome-binding factor A from Helicobacter pylori (strain P12).